We begin with the raw amino-acid sequence, 470 residues long: D-serine/D-alanine/glycine transporter (470 aa).

A run of 12 helical transmembrane segments spans residues 30–50 (LIAIGGAIGTGLFMGSGKTIS), 51–71 (LAGPSIIFVYMIIGFMLFFVM), 102–122 (FTGWTYWFCWVVTGMADVVAI), 128–148 (FWFPGLSDWVASLSVIILLLV), 162–182 (FWFAMIKIVAIVSLIVVGLVM), 211–231 (LSGFFAGFQIAVFAFVGIELV), 256–276 (IIMFYVFSLIVIMSVTPWSSV), 283–303 (FVELFVLVGLPAAASVINFVV), 350–370 (FSCICLLGGVVMLYVNPSVIG), 371–391 (AFTMITTVSAILFMFVWTIIL), 413–433 (PLGKLMCWVCMAFFVFVLVLL), and 441–461 (QALLVTPLWFIALGLGWLFIG).

This sequence belongs to the amino acid-polyamine-organocation (APC) superfamily. Amino acid transporter (AAT) (TC 2.A.3.1) family.

The protein resides in the cell inner membrane. The catalysed reaction is D-alanine(in) + H(+)(in) = D-alanine(out) + H(+)(out). The enzyme catalyses D-serine(out) + H(+)(out) = D-serine(in) + H(+)(in). It catalyses the reaction glycine(in) + H(+)(in) = glycine(out) + H(+)(out). It carries out the reaction D-cycloserine(in) + H(+)(in) = D-cycloserine(out) + H(+)(out). Uptake of D-serine is inhibited by D-alanine, D-cycloserine, glycine and at high concentrations of D-threonine. Functionally, permease that is involved in the transport across the cytoplasmic membrane of D-alanine, D-serine and glycine. Is the only transporter of D-alanine. Transports D-serine less efficiently than DsdX. In addition, in minimal media, transports the broad spectrum antibiotic D-cycloserine into the cell. Transports D-cycloserine only in minimal media, and not in a complex medium, suggesting that CycA does not play a role in D-cycloserine transport when E.coli is grown in a complex or biologically relevant medium, probably due to competition from other CycA substrates present in the medium. The chain is D-serine/D-alanine/glycine transporter (cycA) from Escherichia coli O6:H1 (strain CFT073 / ATCC 700928 / UPEC).